Reading from the N-terminus, the 161-residue chain is MVPKLFTSQICLLLLLGLMGVEGSLHAKPQQFTWAQWFEIQHINMTSQQCTNAMRVINNYQRRCKNQNTFLRTTFANVVNVCGNPNMTCPSNKTRKNCHQSGSQVPLIHCNLTTPSPQNISNCGYAQTPANMFYIVACDNRDQRRDPPQYPVVPVHLDRII.

The first 27 residues, 1 to 27 (MVPKLFTSQICLLLLLGLMGVEGSLHA), serve as a signal peptide directing secretion. C-linked (Man) tryptophan glycosylation occurs at W34. H42 acts as the Proton acceptor in catalysis. N-linked (GlcNAc...) asparagine glycosylation occurs at N44. 4 disulfide bridges follow: C50–C110, C64–C123, C82–C138, and C89–C98. The residue at position 60 (Y60) is a 3'-nitrotyrosine. 65-69 (KNQNT) is a binding site for substrate. N-linked (GlcNAc...) asparagine glycosylation is found at N86, N92, N111, and N119. H156 functions as the Proton donor in the catalytic mechanism.

The protein belongs to the pancreatic ribonuclease family. As to quaternary structure, interacts with and forms a tight 1:1 complex with RNH1. Dimerization of two such complexes may occur.

The protein localises to the lysosome. It is found in the cytoplasmic granule. The enzyme catalyses an [RNA] containing cytidine + H2O = an [RNA]-3'-cytidine-3'-phosphate + a 5'-hydroxy-ribonucleotide-3'-[RNA].. It carries out the reaction an [RNA] containing uridine + H2O = an [RNA]-3'-uridine-3'-phosphate + a 5'-hydroxy-ribonucleotide-3'-[RNA].. In terms of biological role, this is a non-secretory ribonuclease. It is a pyrimidine specific nuclease with a slight preference for U. Cytotoxin and helminthotoxin. Possesses a wide variety of biological activities. This is Non-secretory ribonuclease (RNASE2) from Nomascus leucogenys (Northern white-cheeked gibbon).